The following is a 525-amino-acid chain: Cytochrome P450 monooxygenase tpcC (525 aa).

Residues Leu13–Val33 form a helical membrane-spanning segment. Position 457 (Cys457) interacts with heme.

This sequence belongs to the cytochrome P450 family. The cofactor is heme.

It localises to the membrane. It participates in secondary metabolite biosynthesis; terpenoid biosynthesis. In terms of biological role, cytochrome P450 monooxygenase; part of the gene cluster that mediates the biosynthesis of terpestacin. The bifunctional terpene synthase tpcA converts isopentenyl diphosphate (IPP) and dimethylallyl diphosphate (DMAPP) into the sesterterpene preterpestacin I. The C-terminal prenyltransferase (PT) domain of tpcA catalyzes formation of GFPP, whereas the N-terminal terpene cyclase (TC) domain catalyzes the cyclization of GFPP into preterpestacin I. The cytochrome P450 monooxygenase tpcB then hydroxylates preterpestacin I to yield 24-hydroxypreterpstacin I (renamed as preterpestacin II) whereas the cytochrome P450 monooxygenase tpcC further hydroxylates preterpestacin II to yield 16,17-dihydroxypreterpestacin II (renamed as preterpestacin III). Finally, the FAD-dependent monooxygenase tpcD converts preterpestacin III into terpestacin. This is Cytochrome P450 monooxygenase tpcC from Cochliobolus heterostrophus (strain C5 / ATCC 48332 / race O) (Southern corn leaf blight fungus).